The primary structure comprises 207 residues: MIDQEESNFNFNFNQPQQPQQQQFHGKSVKKNKNKNNNNNSESGNKNGGENKNGVEKRFKTLPPAESLPRNETVGGYIFVCNNDTMQENLKRQLFGLPPRYRDSVRAITPGLPLFLYNYSTHQLHGVFEAASFGGTNIDPTAWEDKKNQGESRFPAQVRVMTRKICEPLEEDSFRPILHHYDGPKFRLELNIPEAISLLDIFEETKA.

The tract at residues 1–68 (MIDQEESNFN…FKTLPPAESL (68 aa)) is disordered. 2 stretches are compositionally biased toward low complexity: residues 8–26 (NFNFNFNQPQQPQQQQFHG) and 35–52 (KNNNNNSESGNKNGGENK). The 133-residue stretch at 72 to 204 (ETVGGYIFVC…AISLLDIFEE (133 aa)) folds into the DCD domain.

In Daucus carota (Wild carrot), this protein is B2 protein.